We begin with the raw amino-acid sequence, 212 residues long: Ribonuclease HII (212 aa).

The RNase H type-2 domain maps to 1 to 206; that stretch reads MILVGIDEAG…LQDIAPNYYI (206 aa). A divalent metal cation-binding residues include aspartate 7, glutamate 8, and aspartate 104.

It belongs to the RNase HII family. Mn(2+) serves as cofactor. The cofactor is Mg(2+).

It localises to the cytoplasm. The catalysed reaction is Endonucleolytic cleavage to 5'-phosphomonoester.. Its function is as follows. Endonuclease that specifically degrades the RNA of RNA-DNA hybrids. The sequence is that of Ribonuclease HII from Sulfolobus acidocaldarius (strain ATCC 33909 / DSM 639 / JCM 8929 / NBRC 15157 / NCIMB 11770).